We begin with the raw amino-acid sequence, 265 residues long: Hydroxyethylthiazole kinase (265 aa).

Residue M41 participates in substrate binding. R117 and S163 together coordinate ATP. G190 lines the substrate pocket.

It belongs to the Thz kinase family. Mg(2+) is required as a cofactor.

The catalysed reaction is 5-(2-hydroxyethyl)-4-methylthiazole + ATP = 4-methyl-5-(2-phosphooxyethyl)-thiazole + ADP + H(+). It functions in the pathway cofactor biosynthesis; thiamine diphosphate biosynthesis; 4-methyl-5-(2-phosphoethyl)-thiazole from 5-(2-hydroxyethyl)-4-methylthiazole: step 1/1. In terms of biological role, catalyzes the phosphorylation of the hydroxyl group of 4-methyl-5-beta-hydroxyethylthiazole (THZ). The protein is Hydroxyethylthiazole kinase of Pediococcus pentosaceus (strain ATCC 25745 / CCUG 21536 / LMG 10740 / 183-1w).